The sequence spans 325 residues: Biotin synthase (325 aa).

The Radical SAM core domain occupies 36–254 (NEVQLAMLLS…IALARIMFPK (219 aa)). Positions 51, 55, and 58 each coordinate [4Fe-4S] cluster. Residues Cys-95, Cys-126, Cys-186, and Arg-258 each coordinate [2Fe-2S] cluster.

It belongs to the radical SAM superfamily. Biotin synthase family. In terms of assembly, homodimer. [4Fe-4S] cluster is required as a cofactor. It depends on [2Fe-2S] cluster as a cofactor.

It catalyses the reaction (4R,5S)-dethiobiotin + (sulfur carrier)-SH + 2 reduced [2Fe-2S]-[ferredoxin] + 2 S-adenosyl-L-methionine = (sulfur carrier)-H + biotin + 2 5'-deoxyadenosine + 2 L-methionine + 2 oxidized [2Fe-2S]-[ferredoxin]. Its pathway is cofactor biosynthesis; biotin biosynthesis; biotin from 7,8-diaminononanoate: step 2/2. In terms of biological role, catalyzes the conversion of dethiobiotin (DTB) to biotin by the insertion of a sulfur atom into dethiobiotin via a radical-based mechanism. The chain is Biotin synthase from Neorickettsia sennetsu (strain ATCC VR-367 / Miyayama) (Ehrlichia sennetsu).